Consider the following 208-residue polypeptide: NAD(P)H-hydrate epimerase (208 aa).

The YjeF N-terminal domain occupies methionine 11–tyrosine 208. Asparagine 59–aspartate 63 contacts (6S)-NADPHX. K(+) contacts are provided by asparagine 60 and aspartate 122. (6S)-NADPHX contacts are provided by residues glycine 126–proline 132, tyrosine 137, and aspartate 155. A K(+)-binding site is contributed by serine 158.

It belongs to the NnrE/AIBP family. It depends on K(+) as a cofactor.

It catalyses the reaction (6R)-NADHX = (6S)-NADHX. The enzyme catalyses (6R)-NADPHX = (6S)-NADPHX. Functionally, catalyzes the epimerization of the S- and R-forms of NAD(P)HX, a damaged form of NAD(P)H that is a result of enzymatic or heat-dependent hydration. This is a prerequisite for the S-specific NAD(P)H-hydrate dehydratase to allow the repair of both epimers of NAD(P)HX. The polypeptide is NAD(P)H-hydrate epimerase (Limosilactobacillus fermentum (strain NBRC 3956 / LMG 18251) (Lactobacillus fermentum)).